Here is a 204-residue protein sequence, read N- to C-terminus: Large ribosomal subunit protein eL15 (204 aa).

Disordered stretches follow at residues 71–91 (RKRP…GVNQ) and 159–182 (REMR…HYSQ). Residues 159–174 (REMRGKTSAGRKHRGL) are compositionally biased toward basic residues.

The protein belongs to the eukaryotic ribosomal protein eL15 family.

This Faxonius limosus (Spinycheek crayfish) protein is Large ribosomal subunit protein eL15 (RPL15).